We begin with the raw amino-acid sequence, 67 residues long: Brevinin-1CDYa (67 aa).

The first 22 residues, Met1–Cys22, serve as a signal peptide directing secretion. A propeptide spanning residues Glu23–Glu45 is cleaved from the precursor. The cysteines at positions 61 and 67 are disulfide-linked.

This sequence belongs to the frog skin active peptide (FSAP) family. Brevinin subfamily. As to expression, expressed by the skin glands.

It is found in the secreted. Antimicrobial peptide. Has low activity against the Gram-positive bacterium S.aureus (MIC=12.5 uM) and the Gram-negative bacterium E.coli (MIC=25 uM). Has weak hemolytic activity against human erythrocytes. This is Brevinin-1CDYa from Rana dybowskii (Dybovsky's frog).